A 274-amino-acid chain; its full sequence is 3-methyl-2-oxobutanoate hydroxymethyltransferase (274 aa).

Positions 44 and 83 each coordinate Mg(2+). Residues 44 to 45, aspartate 83, and lysine 113 each bind 3-methyl-2-oxobutanoate; that span reads DS. Glutamate 115 lines the Mg(2+) pocket. The Proton acceptor role is filled by glutamate 182.

The protein belongs to the PanB family. As to quaternary structure, homodecamer; pentamer of dimers. The cofactor is Mg(2+).

It localises to the cytoplasm. The catalysed reaction is 3-methyl-2-oxobutanoate + (6R)-5,10-methylene-5,6,7,8-tetrahydrofolate + H2O = 2-dehydropantoate + (6S)-5,6,7,8-tetrahydrofolate. It participates in cofactor biosynthesis; (R)-pantothenate biosynthesis; (R)-pantoate from 3-methyl-2-oxobutanoate: step 1/2. Functionally, catalyzes the reversible reaction in which hydroxymethyl group from 5,10-methylenetetrahydrofolate is transferred onto alpha-ketoisovalerate to form ketopantoate. The chain is 3-methyl-2-oxobutanoate hydroxymethyltransferase from Campylobacter jejuni subsp. jejuni serotype O:23/36 (strain 81-176).